Here is a 208-residue protein sequence, read N- to C-terminus: 3-isopropylmalate dehydratase small subunit (208 aa).

It belongs to the LeuD family. LeuD type 1 subfamily. In terms of assembly, heterodimer of LeuC and LeuD.

It catalyses the reaction (2R,3S)-3-isopropylmalate = (2S)-2-isopropylmalate. It participates in amino-acid biosynthesis; L-leucine biosynthesis; L-leucine from 3-methyl-2-oxobutanoate: step 2/4. Catalyzes the isomerization between 2-isopropylmalate and 3-isopropylmalate, via the formation of 2-isopropylmaleate. The sequence is that of 3-isopropylmalate dehydratase small subunit from Granulibacter bethesdensis (strain ATCC BAA-1260 / CGDNIH1).